The primary structure comprises 218 residues: Capsid protein (218 aa).

Methionine 1 is subject to N-acetylmethionine; by host. A compositionally biased stretch (low complexity) spans methionine 1–glycine 10. The interval methionine 1–alanine 30 is disordered. Positions arginine 11 to serine 21 are enriched in basic residues.

It belongs to the cucumovirus capsid protein family.

Its subcellular location is the virion. In terms of biological role, capsid protein. Probably binds RNA and plays a role in packaging. The sequence is that of Capsid protein from Cucumis sativus (Cucumber).